Consider the following 737-residue polypeptide: Dual specificity protein kinase KNS1 (737 aa).

2 disordered regions span residues 1-33 (MSQN…SSNK) and 270-290 (SSLR…NKSN). A compositionally biased stretch (polar residues) spans 15-33 (ANMNNSTTTGPANNTSSNK). Residues 277–290 (SNGSSESASSNKSN) show a composition bias toward low complexity. Residues 313-720 (FVVKDLLGQG…AKDALDHEWF (408 aa)) form the Protein kinase domain. Residues 319-327 (LGQGTFGKV) and Lys343 each bind ATP. The active-site Proton acceptor is Asp440. Thr562 bears the Phosphothreonine mark.

This sequence belongs to the protein kinase superfamily. CMGC Ser/Thr protein kinase family. Lammer subfamily. Post-translationally, phosphorylated (auto-) on Ser/Thr/Tyr.

It catalyses the reaction L-seryl-[protein] + ATP = O-phospho-L-seryl-[protein] + ADP + H(+). The enzyme catalyses L-threonyl-[protein] + ATP = O-phospho-L-threonyl-[protein] + ADP + H(+). The catalysed reaction is L-tyrosyl-[protein] + ATP = O-phospho-L-tyrosyl-[protein] + ADP + H(+). Functionally, nonessential protein kinase. The protein is Dual specificity protein kinase KNS1 (KNS1) of Saccharomyces cerevisiae (strain ATCC 204508 / S288c) (Baker's yeast).